A 165-amino-acid polypeptide reads, in one-letter code: C-phycoerythrin class 2 subunit alpha (165 aa).

Residue C75 coordinates phycourobilin. C83 and C140 together coordinate (2R,3E)-phycoerythrobilin.

The protein belongs to the phycobiliprotein family. In terms of assembly, heterodimer of an alpha and a beta chain. In terms of processing, contains two covalently linked phycoerythrobilin chromophores and one covalently linked phycourobilin chromophore.

It localises to the cellular thylakoid membrane. Its function is as follows. Light-harvesting photosynthetic bile pigment-protein from the phycobiliprotein complex. The protein is C-phycoerythrin class 2 subunit alpha (mpeA) of Synechococcus sp. (strain WH8020).